Consider the following 574-residue polypeptide: Enolase 4 (574 aa).

The segment covering 165 to 175 (EKERRQMEREA) has biased composition (basic and acidic residues). A disordered region spans residues 165 to 221 (EKERRQMEREASPMPLQPEPSPVTSPAPGKKKGSGKGKKAAVVEKPIPPEETPEAVV). Residues 179 to 189 (PLQPEPSPVTS) are compositionally biased toward pro residues. A compositionally biased stretch (basic residues) spans 193-203 (GKKKGSGKGKK). A substrate-binding site is contributed by glutamate 287. Lysine 467 serves as the catalytic Proton acceptor. Lysine 518 lines the substrate pocket.

It belongs to the enolase family.

The catalysed reaction is (2R)-2-phosphoglycerate = phosphoenolpyruvate + H2O. Its pathway is carbohydrate degradation; glycolysis; pyruvate from D-glyceraldehyde 3-phosphate: step 4/5. The protein is Enolase 4 (eno4) of Xenopus tropicalis (Western clawed frog).